Here is a 595-residue protein sequence, read N- to C-terminus: APOBEC1 complementation factor (595 aa).

RRM domains are found at residues 56-134, 136-218, and 231-303; these read CEIF…ASVD, CRLF…WAEP, and KILY…LAKP. Positions 360-409 are required for nuclear localization; the sequence is HFPATKGHLSNRALIRTPSVREIYMNVPVGAAGVRGLGGRGYLAYTGLGR.

In terms of assembly, part of the apolipoprotein B mRNA editing complex with APOBEC1. Interacts with TNPO2; TNPO2 may be responsible for transport of A1CF into the nucleus. Interacts with SYNCRIP. Interacts with CELF2/CUGBP2. Interacts with RBM47. As to expression, expressed primarily in liver, small intestine and kidney.

The protein resides in the nucleus. It localises to the endoplasmic reticulum. Its subcellular location is the cytoplasm. Essential component of the apolipoprotein B mRNA editing enzyme complex which is responsible for the postranscriptional editing of a CAA codon for Gln to a UAA codon for stop in APOB mRNA. Binds to APOB mRNA and is probably responsible for docking the catalytic subunit, APOBEC1, to the mRNA to allow it to deaminate its target cytosine. The complex also seems to protect the edited APOB mRNA from nonsense-mediated decay. The chain is APOBEC1 complementation factor (A1cf) from Mus musculus (Mouse).